Reading from the N-terminus, the 117-residue chain is Immunoglobulin heavy variable 3-74 (117 aa).

Residues 1 to 19 (MEFGLSWVFLVAILKGVQC) form the signal peptide. The interval 20-44 (EVQLVESGGGLVQPGGSLRLSCAAS) is framework-1. Residues 20-117 (EVQLVESGGG…EDTAVYYCAR (98 aa)) enclose the Ig-like domain. Residues Cys-41 and Cys-115 are joined by a disulfide bond. The segment at 45-52 (GFTFSSYW) is complementarity-determining-1. The framework-2 stretch occupies residues 53-69 (MHWVRQAPGKGLVWVSR). The interval 70–77 (INSDGSST) is complementarity-determining-2. Positions 78-115 (SYADSVKGRFTISRDNAKNTLYLQMNSLRAEDTAVYYC) are framework-3. The segment at 116–117 (AR) is complementarity-determining-3.

Immunoglobulins are composed of two identical heavy chains and two identical light chains; disulfide-linked.

It is found in the secreted. The protein resides in the cell membrane. Functionally, v region of the variable domain of immunoglobulin heavy chains that participates in the antigen recognition. Immunoglobulins, also known as antibodies, are membrane-bound or secreted glycoproteins produced by B lymphocytes. In the recognition phase of humoral immunity, the membrane-bound immunoglobulins serve as receptors which, upon binding of a specific antigen, trigger the clonal expansion and differentiation of B lymphocytes into immunoglobulins-secreting plasma cells. Secreted immunoglobulins mediate the effector phase of humoral immunity, which results in the elimination of bound antigens. The antigen binding site is formed by the variable domain of one heavy chain, together with that of its associated light chain. Thus, each immunoglobulin has two antigen binding sites with remarkable affinity for a particular antigen. The variable domains are assembled by a process called V-(D)-J rearrangement and can then be subjected to somatic hypermutations which, after exposure to antigen and selection, allow affinity maturation for a particular antigen. In Homo sapiens (Human), this protein is Immunoglobulin heavy variable 3-74.